A 252-amino-acid polypeptide reads, in one-letter code: Lipoprotein PrgK (252 aa).

The first 17 residues, 1 to 17 (MIRRYLYTFLLVMTLAG), serve as a signal peptide directing secretion. A lipid anchor (N-palmitoyl cysteine) is attached at cysteine 18. A lipid anchor (S-diacylglycerol cysteine) is attached at cysteine 18. A helical membrane pass occupies residues 207–227 (FATSWIVLIILLSVMSAGFGV).

It belongs to the YscJ lipoprotein family.

It localises to the cell outer membrane. Functionally, required for invasion of epithelial cells. Could be involved in protein secretion. This Salmonella typhimurium (strain LT2 / SGSC1412 / ATCC 700720) protein is Lipoprotein PrgK (prgK).